The chain runs to 31 residues: Photosystem II reaction center protein T (31 aa).

A helical membrane pass occupies residues 3-23; that stretch reads SFAYILILTLAIATLFFAIAF.

This sequence belongs to the PsbT family. In terms of assembly, PSII is composed of 1 copy each of membrane proteins PsbA, PsbB, PsbC, PsbD, PsbE, PsbF, PsbH, PsbI, PsbJ, PsbK, PsbL, PsbM, PsbT, PsbX, PsbY, PsbZ, Psb30/Ycf12, peripheral proteins PsbO, CyanoQ (PsbQ), PsbU, PsbV and a large number of cofactors. It forms dimeric complexes.

It localises to the cellular thylakoid membrane. Found at the monomer-monomer interface of the photosystem II (PS II) dimer, plays a role in assembly and dimerization of PSII. PSII is a light-driven water plastoquinone oxidoreductase, using light energy to abstract electrons from H(2)O, generating a proton gradient subsequently used for ATP formation. This Synechococcus sp. (strain WH7803) protein is Photosystem II reaction center protein T.